Reading from the N-terminus, the 600-residue chain is MNHQKYIRNFSIIAHIDHGKSTLADRLIEHCGGLQAREMSQQVLDSMDIEKERGITIKAQTVRLVYKAKDGNTYYLNLMDTPGHVDFAYEVSRSLAACEGSLLVVDSTQGVEAQTLANVYQAIENDHEIVLVLNKLDLPASEPEQVKQQIEDIIGIDTSEAVLISAKSGIGIDLVLEAIVSKLPPPKESSSDILKALLVDSWYDPYLGVVILVRVIDGYLRKNMRIKMMATNSVYTVENVGYFTPKKHISDVLHAGEIGFFTAAIKQVADCKVGDTITDEKKPCEQALPGFKPQLPVVFCGLYPTDSSEFEHLKDSLAKLRLNDASFEYEMESSSALGVGFRCGFLGLLHLEIIQERLSREFNLDLITTAPSVVYKIHMRDGENLEIHNPADLPDLQKIESMEEPWIKATIMVPDEFLGAVLSLCTEKRGMQLDHSYIANRAKIIYKLPLNEIVYDFYDRLKSCSKGYASFEWQMDVYEPSELVKLGILVNAEVVDALSTIVHRSRAEQRGRALCVRLKDLIPRQQIDIAIQASIGSRIIARETIKALRKDVLSKCYGGDISRKRKLLEKQKAGKKRMRQYGNIEIPQSAFIAALKIGDE.

Residues 5–187 form the tr-type G domain; sequence KYIRNFSIIA…AIVSKLPPPK (183 aa). GTP contacts are provided by residues 17-22 and 134-137; these read DHGKST and NKLD.

It belongs to the TRAFAC class translation factor GTPase superfamily. Classic translation factor GTPase family. LepA subfamily.

Its subcellular location is the cell inner membrane. The catalysed reaction is GTP + H2O = GDP + phosphate + H(+). Its function is as follows. Required for accurate and efficient protein synthesis under certain stress conditions. May act as a fidelity factor of the translation reaction, by catalyzing a one-codon backward translocation of tRNAs on improperly translocated ribosomes. Back-translocation proceeds from a post-translocation (POST) complex to a pre-translocation (PRE) complex, thus giving elongation factor G a second chance to translocate the tRNAs correctly. Binds to ribosomes in a GTP-dependent manner. This is Elongation factor 4 from Rickettsia rickettsii (strain Iowa).